The chain runs to 394 residues: Elongation factor Tu (394 aa).

One can recognise a tr-type G domain in the interval 10-204; it reads KPHINVGTIG…FLDSYIPEPK (195 aa). The tract at residues 19-26 is G1; that stretch reads GHVDHGKT. Residue 19–26 participates in GTP binding; it reads GHVDHGKT. Position 26 (Thr-26) interacts with Mg(2+). Residues 60 to 64 form a G2 region; it reads GITIN. Positions 81 to 84 are G3; it reads DCPG. Residues 81-85 and 136-139 contribute to the GTP site; these read DCPGH and NKCD. Residues 136–139 are G4; that stretch reads NKCD. The tract at residues 174-176 is G5; that stretch reads SAL.

It belongs to the TRAFAC class translation factor GTPase superfamily. Classic translation factor GTPase family. EF-Tu/EF-1A subfamily. Monomer.

The protein resides in the cytoplasm. The enzyme catalyses GTP + H2O = GDP + phosphate + H(+). In terms of biological role, GTP hydrolase that promotes the GTP-dependent binding of aminoacyl-tRNA to the A-site of ribosomes during protein biosynthesis. The polypeptide is Elongation factor Tu (Buchnera aphidicola subsp. Acyrthosiphon pisum (strain 5A)).